A 559-amino-acid polypeptide reads, in one-letter code: Serine/threonine-protein kinase bur1 (559 aa).

Residues Tyr40 to Phe341 form the Protein kinase domain. ATP contacts are provided by residues Leu46–Val54 and Lys69. Residue Asp171 is the Proton acceptor of the active site. Over residues Ser359–Ala372 the composition is skewed to basic and acidic residues. Residues Ser359–Arg559 are disordered. Positions Gly400–Gly414 are enriched in gly residues. 3 stretches are compositionally biased toward basic and acidic residues: residues Asp457–Pro467, Tyr491–Thr534, and Pro543–Arg559.

The protein belongs to the protein kinase superfamily. CMGC Ser/Thr protein kinase family. CDC2/CDKX subfamily.

The protein localises to the nucleus. The catalysed reaction is L-seryl-[protein] + ATP = O-phospho-L-seryl-[protein] + ADP + H(+). The enzyme catalyses L-threonyl-[protein] + ATP = O-phospho-L-threonyl-[protein] + ADP + H(+). It carries out the reaction [DNA-directed RNA polymerase] + ATP = phospho-[DNA-directed RNA polymerase] + ADP + H(+). Its function is as follows. Serine/threonine-protein kinase involved in transcription regulation. Phosphorylates the mus-8/ubc2 ubiquitin-conjugating enzyme (E2), leading to monoubiquitination of histone H2B and the silencing of telomeric-associated genes. Also required for histone H3 methylation. Necessary for the recovery from pheromone-induced growth arrest in the cell cycle G1 phase. The protein is Serine/threonine-protein kinase bur1 (stk-1) of Neurospora crassa (strain ATCC 24698 / 74-OR23-1A / CBS 708.71 / DSM 1257 / FGSC 987).